The following is a 453-amino-acid chain: MSFDLIIKNGTVILENEARVVDIAVKGGKIAAIGQDLGDAKEVMDASGLVVSPGMVDAHTHISEPGRSHWEGYETGTRAAAKGGITTMIEMPLNQLPATVDRASIELKFDAAKGKLTIDAAQLGGLVSYNIDRLHELDEVGVVGFKCFVATCGDRGIDNDFRDVNDWQFFKGAQKLGELGQPVLVHCENALICDELGEEAKREGRVTAHDYVASRPVFTEVEAIRRVLYLAKVAGCRLHVCHVSSPEGVEEVTRARQEGQDVTCESCPHYFVLDTDQFEEIGTLAKCSPPIRDLENQKGMWEKLFNGEIDCLVSDHSPCPPEMKAGNIMKAWGGIAGLQSCMDVMFDEAVQKRGMSLPMFGKLMATNAADIFGLQQKGRIAPGKDADFVFIQPNSSYVLTNDDLEYRHKVSPYVGRTIGARITKTILRGDVIYDIEQGFPVAPKGQFILKHQQ.

Positions 59, 61, 146, 186, 242, and 315 each coordinate Zn(2+). N6-carboxylysine is present on Lys-146.

This sequence belongs to the metallo-dependent hydrolases superfamily. Allantoinase family. Homotetramer. Requires Zn(2+) as cofactor. Carboxylation allows a single lysine to coordinate two zinc ions.

It catalyses the reaction (S)-allantoin + H2O = allantoate + H(+). The protein operates within nitrogen metabolism; (S)-allantoin degradation; allantoate from (S)-allantoin: step 1/1. Functionally, catalyzes the conversion of allantoin (5-ureidohydantoin) to allantoic acid by hydrolytic cleavage of the five-member hydantoin ring. The polypeptide is Allantoinase (Escherichia coli (strain K12 / MC4100 / BW2952)).